The sequence spans 440 residues: C4-dicarboxylate transport protein (440 aa).

Helical transmembrane passes span 8 to 28, 40 to 60, 74 to 94, 147 to 167, 187 to 207, 221 to 241, 288 to 308, and 354 to 374; these read LYLQ…LFPA, FIKL…VTGI, LKGL…GLVV, GDIL…AALK, IVGF…AFTV, LIAC…GLVL, VVGL…SIYL, and AATL…LLGV. Positions 419-440 are disordered; it reads EEVEPANEPEPPAIPAGAGLHG.

This sequence belongs to the dicarboxylate/amino acid:cation symporter (DAACS) (TC 2.A.23) family.

The protein localises to the cell inner membrane. Functionally, responsible for the transport of dicarboxylates such as succinate, fumarate, and malate from the periplasm across the membrane. The sequence is that of C4-dicarboxylate transport protein from Anaeromyxobacter sp. (strain K).